A 393-amino-acid chain; its full sequence is Riboflavin biosynthesis protein RibBA (393 aa).

The interval 1-200 is DHBP synthase; that stretch reads MQFDNIDSAL…IDDLIEYRKK (200 aa). Residues 27–28, aspartate 32, 139–143, and glutamate 163 contribute to the D-ribulose 5-phosphate site; these read RE and RNGHT. Residue glutamate 28 coordinates Mg(2+). Histidine 142 contacts Mg(2+). Residues 201-393 are GTP cyclohydrolase II; that stretch reads LEPEIEFKAK…TKKIKMGHLI (193 aa). 249–253 contributes to the GTP binding site; sequence RLHSA. Positions 254, 265, and 267 each coordinate Zn(2+). GTP-binding positions include glutamine 270, 291–293, and threonine 313; that span reads EGR. Aspartate 325 serves as the catalytic Proton acceptor; for GTP cyclohydrolase activity. The active-site Nucleophile; for GTP cyclohydrolase activity is arginine 327. Residues serine 348 and lysine 353 each contribute to the GTP site.

The protein in the N-terminal section; belongs to the DHBP synthase family. In the C-terminal section; belongs to the GTP cyclohydrolase II family. Requires Mg(2+) as cofactor. It depends on Mn(2+) as a cofactor. The cofactor is Zn(2+).

The enzyme catalyses D-ribulose 5-phosphate = (2S)-2-hydroxy-3-oxobutyl phosphate + formate + H(+). It catalyses the reaction GTP + 4 H2O = 2,5-diamino-6-hydroxy-4-(5-phosphoribosylamino)-pyrimidine + formate + 2 phosphate + 3 H(+). It functions in the pathway cofactor biosynthesis; riboflavin biosynthesis; 2-hydroxy-3-oxobutyl phosphate from D-ribulose 5-phosphate: step 1/1. The protein operates within cofactor biosynthesis; riboflavin biosynthesis; 5-amino-6-(D-ribitylamino)uracil from GTP: step 1/4. Functionally, catalyzes the conversion of D-ribulose 5-phosphate to formate and 3,4-dihydroxy-2-butanone 4-phosphate. Catalyzes the conversion of GTP to 2,5-diamino-6-ribosylamino-4(3H)-pyrimidinone 5'-phosphate (DARP), formate and pyrophosphate. This is Riboflavin biosynthesis protein RibBA from Staphylococcus aureus (strain MRSA252).